The primary structure comprises 227 residues: uncharacterized protein (227 aa).

An N-terminal signal peptide occupies residues 1 to 25 (MLIMKKLLLIAATSATMLSSSVSFA).

To R.conorii RC1281.

This is an uncharacterized protein from Rickettsia conorii (strain ATCC VR-613 / Malish 7).